The sequence spans 491 residues: Arginine decarboxylase (491 aa).

K227 is subject to N6-(pyridoxal phosphate)lysine.

It belongs to the Orn/Lys/Arg decarboxylase class-I family. Pyridoxal 5'-phosphate is required as a cofactor.

The protein localises to the cytoplasm. It carries out the reaction L-arginine + H(+) = agmatine + CO2. It functions in the pathway amine and polyamine biosynthesis; agmatine biosynthesis; agmatine from L-arginine: step 1/1. Its function is as follows. Catalyzes the formation of agmatine from arginine. This Halalkalibacterium halodurans (strain ATCC BAA-125 / DSM 18197 / FERM 7344 / JCM 9153 / C-125) (Bacillus halodurans) protein is Arginine decarboxylase (speA).